The primary structure comprises 355 residues: MAAAAATAPAAAVVRRMKLGSQGMEVSAQGLGCMGMSAVYGERKPEADMVALVRHAVAAGVTFLDTSDVYGPHTNEVLVGKAVAAAAATEEEVQVQVATKFGITPAWEVRGDPAYVRAACEGSLRRLGVGCIDLYYQHRIDSTVPVEITMGELKKLVEEGKIKYIGLSEASASTIRRAHVVHPITAVQIEWSLWSRDVEEDIVPTCRELGIGIVAYSPLGRGFFSSGAKLVDELPDDDFRKSLPRFQPENLEKNAAIFEKVNAMAARKGCTSSQLALAWVHHQGSDVCPIPGTTKIHNFDQNVGALSVKLTPDEMSELESYASADVVQGDRYHGTFLNTWKNSETPPLSSWRSGN.

The Proton donor role is filled by Y70. Position 138 (H138) interacts with substrate. 217-227 is an NADP(+) binding site; that stretch reads SPLGRGFFSSG.

This sequence belongs to the aldo/keto reductase family.

This is Probable aldo-keto reductase 3 from Oryza sativa subsp. japonica (Rice).